The chain runs to 331 residues: Glycerol-3-phosphate dehydrogenase [NAD(P)+] (331 aa).

NADPH is bound by residues S11, F12, R32, and K106. Sn-glycerol 3-phosphate-binding residues include K106, G134, and S136. NADPH is bound at residue A138. Sn-glycerol 3-phosphate is bound by residues K189, D242, S252, R253, and N254. The active-site Proton acceptor is the K189. Position 253 (R253) interacts with NADPH. NADPH contacts are provided by V277 and E279.

This sequence belongs to the NAD-dependent glycerol-3-phosphate dehydrogenase family.

It localises to the cytoplasm. The catalysed reaction is sn-glycerol 3-phosphate + NAD(+) = dihydroxyacetone phosphate + NADH + H(+). It catalyses the reaction sn-glycerol 3-phosphate + NADP(+) = dihydroxyacetone phosphate + NADPH + H(+). Its pathway is membrane lipid metabolism; glycerophospholipid metabolism. Its function is as follows. Catalyzes the reduction of the glycolytic intermediate dihydroxyacetone phosphate (DHAP) to sn-glycerol 3-phosphate (G3P), the key precursor for phospholipid synthesis. The sequence is that of Glycerol-3-phosphate dehydrogenase [NAD(P)+] from Clostridium perfringens (strain SM101 / Type A).